Consider the following 118-residue polypeptide: uncharacterized protein (118 aa).

Residues M1–A22 form the signal peptide. Residues T41–S71 are a coiled coil.

This is an uncharacterized protein from Schizosaccharomyces pombe (strain 972 / ATCC 24843) (Fission yeast).